Reading from the N-terminus, the 302-residue chain is 4-hydroxy-tetrahydrodipicolinate synthase (302 aa).

Pyruvate is bound at residue T55. Catalysis depends on Y144, which acts as the Proton donor/acceptor. Residue K172 is the Schiff-base intermediate with substrate of the active site. V214 is a pyruvate binding site.

The protein belongs to the DapA family. Homotetramer; dimer of dimers.

The protein localises to the cytoplasm. It catalyses the reaction L-aspartate 4-semialdehyde + pyruvate = (2S,4S)-4-hydroxy-2,3,4,5-tetrahydrodipicolinate + H2O + H(+). Its pathway is amino-acid biosynthesis; L-lysine biosynthesis via DAP pathway; (S)-tetrahydrodipicolinate from L-aspartate: step 3/4. In terms of biological role, catalyzes the condensation of (S)-aspartate-beta-semialdehyde [(S)-ASA] and pyruvate to 4-hydroxy-tetrahydrodipicolinate (HTPA). This chain is 4-hydroxy-tetrahydrodipicolinate synthase, found in Prochlorococcus marinus (strain MIT 9303).